A 343-amino-acid polypeptide reads, in one-letter code: Twinfilin (343 aa).

2 ADF-H domains span residues 4 to 139 (QTGI…KHKV) and 177 to 312 (GINC…EELH). A disordered region spans residues 314 to 343 (RKLNLRPQFSKPKGPPSRGAKRLTKPQAVE).

Belongs to the actin-binding proteins ADF family. Twinfilin subfamily. As to quaternary structure, interacts with G-actin; ADP-actin form.

The protein localises to the cytoplasm. Its subcellular location is the cytoskeleton. The protein resides in the cell cortex. In terms of biological role, actin-binding protein involved in motile and morphological processes. Inhibits actin polymerization, likely by sequestering G-actin. The polypeptide is Twinfilin (twf) (Anopheles gambiae (African malaria mosquito)).